The chain runs to 512 residues: MLFEGLELVSALATLAACLVSVTLLLAVSQQLWQLRWAATRDKSCKLPIPKGSMGFPLIGETGHWLLQGSGFQSSRREKYGNVFKTHLLGRPLIRVTGAENVRKILMGEHHLVSTEWPRSTRMLLGPNTVSNSIGDIHRNKRKVFSKIFSHEALESYLPKIQLVIQDTLRAWSSHPEAINVYQEAQKLTFRMAIRVLLGFSIPEEDLGHLFEVYQQFVENVFSLPVDLPFSGYRRGIQARQTLQKGLEKAIREKLQCTQGKDYSDALDILIESSKEHGKEMTMQELKDGTLELIFAAYATTASASTSLIMQLLKHPAVLEKLREELRAKGLLHSGGCPCEGTLRLDTLSGLHYLDCVIKEVMRLFTPVSGGYRTVLQTFELDGFQIPKGWSVMYSIRDTHDTAPVFKDVNVFDPDRFGQARSEDKDGRFHYLPFGGGVRTCLGKHLAKLFLKVLAVELASTSRFELATRTFPRITLVPVLHPVDGLSVKFFGLDSNQNKILPETEAMLSATV.

Residue C441 coordinates heme.

Belongs to the cytochrome P450 family. Requires heme as cofactor.

The protein resides in the endoplasmic reticulum membrane. The protein localises to the microsome membrane. The enzyme catalyses all-trans-retinoate + reduced [NADPH--hemoprotein reductase] + O2 = all-trans-4-hydroxyretinoate + oxidized [NADPH--hemoprotein reductase] + H2O + H(+). The catalysed reaction is all-trans-retinoate + reduced [NADPH--hemoprotein reductase] + O2 = all-trans-18-hydroxyretinoate + oxidized [NADPH--hemoprotein reductase] + H2O + H(+). In terms of biological role, a cytochrome P450 monooxygenase involved in the metabolism of retinoates (RAs), the active metabolites of vitamin A, and critical signaling molecules in animals. RAs exist as at least four different isomers: all-trans-RA (atRA), 9-cis-RA, 13-cis-RA, and 9,13-dicis-RA, where atRA is considered to be the biologically active isomer, although 9-cis-RA and 13-cis-RA also have activity. Catalyzes the hydroxylation of atRA primarily at C-4 and C-18, thereby contributing to the regulation of atRA homeostasis and signaling. Hydroxylation of atRA limits its biological activity and initiates a degradative process leading to its eventual elimination. Involved in the convertion of atRA to all-trans-4-oxo-RA. Can oxidize all-trans-13,14-dihydroretinoate (DRA) to metabolites which could include all-trans-4-oxo-DRA, all-trans-4-hydroxy-DRA, all-trans-5,8-epoxy-DRA, and all-trans-18-hydroxy-DRA. Shows preference for the following substrates: atRA &gt; 9-cis-RA &gt; 13-cis-RA. Plays a central role in germ cell development: acts by degrading RAs in the developing testis, preventing STRA8 expression, thereby leading to delay of meiosis. Required for the maintenance of the undifferentiated state of male germ cells during embryonic development in Sertoli cells, inducing arrest in G0 phase of the cell cycle and preventing meiotic entry. Plays a role in skeletal development, both at the level of patterning and in the ossification of bone and the establishment of some synovial joints. Essential for postnatal survival. Also has a significant activity in oxidation of tazarotenic acid and may therefore metabolize that xenobiotic in vivo. This Bos taurus (Bovine) protein is Cytochrome P450 26B1 (CYP26B1).